The sequence spans 225 residues: Membrane protein LapB (225 aa).

It to H.influenzae HI_1119.

It is found in the cell membrane. The chain is Membrane protein LapB (lapB) from Mannheimia haemolytica (Pasteurella haemolytica).